We begin with the raw amino-acid sequence, 430 residues long: Small ribosomal subunit protein uS9m (430 aa).

The N-terminal 34 residues, 1 to 34 (MLSRLFLRHSNLRFVTLVSSKSNSQIFSSFIRPL), are a transit peptide targeting the mitochondrion. Positions 32–97 (RPLSTNSSGG…GGEGKWPEEP (66 aa)) are disordered. The segment covering 39 to 48 (SGGGGNGDGN) has biased composition (gly residues). Residues 68 to 79 (GPFSSDDSFGSS) are compositionally biased toward low complexity. A compositionally biased stretch (gly residues) spans 80–91 (GVAGSGLPGGEG).

It belongs to the universal ribosomal protein uS9 family. Interacts (via C terminus) with PIA2. Component of the mitochondrial ribosome small subunit. As to expression, expressed in root tips, young leaves, flowers and siliques.

Its subcellular location is the mitochondrion. In terms of biological role, mitochondrial ribosomal protein required for central cell maturation. May work together with PIA2 in controlling female gametophyte development, possibly by regulating the expression of some mitochondrial proteins. The protein is Small ribosomal subunit protein uS9m of Arabidopsis thaliana (Mouse-ear cress).